The sequence spans 205 residues: MESPMTSTLHRTPLATAGLALVVALGGCGGGGGDSRETPPYVPKATTVDATTPAPAAEPLTIASPMFADGAPIPVQFSCKGANVAPPLTWSSPAGAAELALVVDDPDAVGGLYVHWIVTGIAPGSGSTADGQTPAGGHSVPNSGGRQGYFGPCPPAGTGTHHYRFTLYHLPVALQLPPGATGVQAAQAIAQAASGQARLVGTFEG.

A signal peptide spans 1 to 27 (MESPMTSTLHRTPLATAGLALVVALGG). Residue C28 is the site of N-palmitoyl cysteine attachment. The S-diacylglycerol cysteine moiety is linked to residue C28. The interval 126-145 (GSTADGQTPAGGHSVPNSGG) is disordered.

It belongs to the UPF0098 family.

It localises to the cell membrane. The chain is Putative lipoprotein LppC (lppC) from Mycobacterium tuberculosis (strain CDC 1551 / Oshkosh).